The chain runs to 1302 residues: MEEASLCLGVSSTAPEAEPHLSGPVLNGQYAMSQKLHQITSQLSHAFPELHPRPNPEEKTPAALEEKAHVPMSGQSMGSQMALLANQLGRDVDNSLNGRVDLQQFLNGQNLGIMSQMSDIEDDARKNRKYPCPLCGKRFRFNSILSLHMRTHTGEKPFKCPYCDHRAAQKGNLKIHLRTHKLGNLGKGRGRVREENRLLHELEERAILRDKQMKGSLLQPRSDLKPLAHAQQAPLATCNLALPPNHSVPDVAHPAPSPKPANLQEDSVTPAAGFRCTFCKGKFKKREELDRHIRILHKPYKCTLCDFAASQEEELISHVEKAHITAESAQGQGPNGGGEQSANEFRCEVCGQVFSQAWFLKGHMRKHKDSFEHCCQICGRRFKEPWFLKNHMKVHLNKLSVKNKSPTEPEVAVPMGGLSQEAHANLYSRYLSCLQSGFMAPDKASLNEPSQLYGKGELPAKEKEVLGKLLSPISSMAHSVPEGDKHSLLGCLNLVPPLKSSCIERLQAAAKAAEMDPVNSYQAWQLMARGMAMEHGFLSKEHQLSRNHEDPLANTGVLFDKEKREYVLVGADGSKQKMPADLVHSTKVGNQRDLPNKLDPLEGSREFLSHGLNQTLDYNLQGPGNMKEKPTECPDCGRVFRTYHQVVVHSRVHKRDRKSDEDALHVGVGLEERRGSGSDQESQSVSRSTTPGSSNVTEESGAGGGLSQTGSAQEDSPHPSSPSSSDIGEEAGRAGGVQQQALLRDRNLGSAMKDCPYCGKTFRTSHHLKVHLRIHTGEKPYKCPHCDYAGTQSASLKYHLERHHRERQNGAGPLSGQPPNQEHKDETSSKAPMFIRPDILRGAFKGLPGIDFRGGPASQQWTAGMLSSGDHSGQATGMPSELSSDALKGSDLPSKSSHYSEIGRAYQNIVSNGVNFQGSLQAFMDSFVLSSLKKKDTKDKVPSDAHPMKAHTAEGGEEKASMKPSQRKSEKSQYEPLDLSVRPDAPTLPGSSVTVQDSIAWHGCLFCAFTTSSMELMALHLQANHLGRAKRKDHPTGVTVNCKEQGREASKVSVLPSLQSNKEMALPSAVGVLDSAPEKLAQGPAKETLGDPKSGQWPNHMDPAFCTFPSDFYKQFGVYPAMVGSGAPGSCLNKNTEGKTHPDDDAPILIPETTNKNTTDDLSDIASSEDMDSSKGENNEDEELDTEPEMTSKPLSALSKDGSSEGGDSLLSPGAPQPIQGLVSPLAQAAEEQWHSPGLLPAQDPSAGLPKPERGPPGLEKPMSMLSVLRAYSADGLAAFNGLASSTANSGCIKRPDLCGKF.

The tract at residues 1 to 26 is disordered; the sequence is MEEASLCLGVSSTAPEAEPHLSGPVL. 7 C2H2-type zinc fingers span residues 130–152, 158–180, 274–297, 300–323, 345–367, 373–395, and 631–653; these read YPCP…MRTH, FKCP…LRTH, FRCT…RILH, YKCT…EKAH, FRCE…MRKH, HCCQ…MKVH, and TECP…SRVH. Residues 650–736 form a disordered region; it reads SRVHKRDRKS…IGEEAGRAGG (87 aa). Basic and acidic residues predominate over residues 657-676; that stretch reads RKSDEDALHVGVGLEERRGS. The segment covering 677–698 has biased composition (polar residues); sequence GSDQESQSVSRSTTPGSSNVTE. 2 consecutive C2H2-type zinc fingers follow at residues 753–775 and 781–803; these read KDCP…LRIH and YKCP…LERH. Disordered regions lie at residues 804 to 832, 855 to 897, 935 to 988, and 1133 to 1261; these read HRER…SKAP, GPAS…SKSS, KDTK…APTL, and NKNT…GLEK. 2 positions are modified to phosphoserine: serine 828 and serine 829. Residues 869–883 are compositionally biased toward polar residues; sequence GDHSGQATGMPSELS. Basic and acidic residues predominate over residues 935 to 973; that stretch reads KDTKDKVPSDAHPMKAHTAEGGEEKASMKPSQRKSEKSQ. Acidic residues-rich tracts occupy residues 1161–1171 and 1179–1188; these read DLSDIASSEDM and NEDEELDTEP. Over residues 1198–1212 the composition is skewed to low complexity; that stretch reads LSKDGSSEGGDSLLS.

Belongs to the krueppel C2H2-type zinc-finger protein family. As to expression, expressed predominantly in the brain, while a weak signal is also detected in the heart and testis. Expression is abundant in neuronal cells of the cerebral cortex, hippocampus and hypothalamic area (at protein level).

Its subcellular location is the nucleus. Transcriptional repressor that negatively regulates neuron differentiation by repressing retinoic acid-induced gene transcription. Binds and interrupts RARA from binding to retinoic acid response elements (RARE) composed of tandem 5'-AGGTCA-3' sites known as DR1-DR5. Recognizes and binds 2 copies of the core DNA sequence 5'-CCCCCA-3'. This Mus musculus (Mouse) protein is Zinc finger protein 536 (Znf536).